The primary structure comprises 281 residues: MEMO1 family protein Pars_0062 (281 aa).

The protein belongs to the MEMO1 family.

This chain is MEMO1 family protein Pars_0062, found in Pyrobaculum arsenaticum (strain DSM 13514 / JCM 11321 / PZ6).